Here is a 578-residue protein sequence, read N- to C-terminus: Leucine-rich repeat-containing protein 15 (578 aa).

The N-terminal stretch at 1–21 (MPLKHYLLLLVGCQAWALGLA) is a signal peptide. The LRRNT domain maps to 22-53 (YYGCPSECTCSRASQVECTGARIVAMPTPLPW). Topologically, residues 22-535 (YYGCPSECTC…TWGMTEAQSG (514 aa)) are extracellular. LRR repeat units follow at residues 54–75 (NAMSLQVVNTHITELPENLFLN), 78–99 (ALIALKMEKNELSTIMPGAFRN), 102–123 (SLRYLSLANNKLRMLPIRVFQD), 126–147 (NLESLLLSNNQLVQIQPAQFSQ), 150–171 (NLRELQLHGNNLESIPEEAFDH), 174–195 (GLTKLNLGRNSFTHLSPRLFQH), 198–219 (NLQVLRLHENRLSDIPMGTFDA), 222–243 (NLQELALQENQIGTLSPGLFHN), 246–267 (NLQRLYLSNNHISQLPPGIFMQ), 270–291 (QLNKLTLFGNSLRELSPGVFGP), 294–315 (NLRELWLYNNHITSLADNTFSH), 318–339 (QLQVLILSHNQLTYISPGAFNG), 342–363 (NLRELSLHTNALQDLDSNVFRS), 366–387 (NLQNISLQSNRLRQLPGSIFAN), and 390–411 (GLTTIQLQNNNLENLPLGIFDH). N-linked (GlcNAc...) asparagine glycosylation occurs at Asn-75. A glycan (N-linked (GlcNAc...) asparagine) is linked at Asn-369. Residues 423–473 (NPWRCDSDILPLHNWLLLNRARLGTDTLPVCSSPANVRGQSLVIININFPG) enclose the LRRCT domain. Positions 476-500 (VQGPETPEVPSYPDTPSYPDTTSVS) are disordered. Residues 536 to 556 (LAIAAIVIGIIALACSLAACI) traverse the membrane as a helical segment. At 557 to 578 (CCCCCKKRSQAVLMQMKAPNEC) the chain is on the cytoplasmic side.

It localises to the cell membrane. The sequence is that of Leucine-rich repeat-containing protein 15 (Lrrc15) from Rattus norvegicus (Rat).